Reading from the N-terminus, the 815-residue chain is uncharacterized protein (815 aa).

Residues 1-21 (MNIYRLSFVSCLVMAMPCAMA) form the signal peptide. A disulfide bridge links cysteine 795 with cysteine 814.

The protein belongs to the fimbrial export usher family.

It localises to the cell outer membrane. Functionally, could be involved in the export and assembly of the putative YbgD fimbrial subunit across the outer membrane. This is an uncharacterized protein from Escherichia coli (strain K12).